Consider the following 267-residue polypeptide: 2-keto-3-deoxy-L-rhamnonate aldolase (267 aa).

Residue H49 is the Proton acceptor of the active site. Q151 provides a ligand contact to substrate. Residue E153 participates in Mg(2+) binding. Substrate contacts are provided by A178 and D179. Residue D179 coordinates Mg(2+).

Belongs to the HpcH/HpaI aldolase family. KDR aldolase subfamily. Homohexamer. Mg(2+) is required as a cofactor.

The catalysed reaction is 2-dehydro-3-deoxy-L-rhamnonate = (S)-lactaldehyde + pyruvate. Its function is as follows. Catalyzes the reversible retro-aldol cleavage of 2-keto-3-deoxy-L-rhamnonate (KDR) to pyruvate and lactaldehyde. This is 2-keto-3-deoxy-L-rhamnonate aldolase from Klebsiella pneumoniae subsp. pneumoniae (strain ATCC 700721 / MGH 78578).